We begin with the raw amino-acid sequence, 196 residues long: Hibernation-associated plasma protein HP-20 (196 aa).

An N-terminal signal peptide occupies residues 1–23 (MTDVWRLAIFVLMVNVLNDQVSC). The region spanning 25 to 63 (GPPGPVGYPGVPGVPGPRGPPGQPGAAGRPGDPGPKGPS) is the Collagen-like domain. Positions 28 to 47 (GPVGYPGVPGVPGPRGPPGQ) are enriched in pro residues. Residues 28–64 (GPVGYPGVPGVPGPRGPPGQPGAAGRPGDPGPKGPSV) are disordered. In terms of domain architecture, C1q spans 67–196 (PCRERSAFTV…IYFSGFLISS (130 aa)).

In terms of tissue distribution, plasma; synthesized in the liver.

The protein resides in the secreted. In terms of biological role, plasma proteins HP-20, HP-25, HP-27 and HP-55 form a 140 kDa complex via disulfide bonds in the plasma and are hibernation specific. This is Hibernation-associated plasma protein HP-20 from Tamias sibiricus (Siberian chipmunk).